Consider the following 458-residue polypeptide: Sphingoid long chain base kinase 4 (458 aa).

Residues 103 to 241 (KRSRRFIVFI…FDLMTFEQKG (139 aa)) form the DAGKc domain. Residues 113–115 (NPH) and Thr-145 contribute to the ATP site. 170-173 (GGDG) contributes to the substrate binding site. The active-site Proton donor/acceptor is the Asp-172. Residues Glu-177, 202 to 204 (GSG), Arg-266, Arg-272, and 426 to 428 (DGE) contribute to the ATP site.

The protein localises to the cell membrane. Its subcellular location is the endoplasmic reticulum membrane. The protein resides in the late endosome membrane. It localises to the golgi apparatus membrane. The enzyme catalyses a sphingoid base + ATP = a sphingoid 1-phosphate + ADP + H(+). In terms of biological role, catalyzes the phosphorylation of the sphingoid long chain bases dihydrosphingosine (DHS) and phytosphingosine (PHS) to form dihydrosphingosine 1-phosphate (DHS-1P) and phytosphingosine 1-phosphate (PHS-1P) respectively. Involved in the biosynthesis of sphingolipids and ceramides. Involved in heat-induced transient cell cycle arrest. Accumulation of phosphorylated sphingoid long chain bases (LCBPs) stimulates calcium influx and activates calcineurin signaling. Involved in heat-stress resistance. The chain is Sphingoid long chain base kinase 4 (lcb4) from Schizosaccharomyces pombe (strain 972 / ATCC 24843) (Fission yeast).